Here is a 436-residue protein sequence, read N- to C-terminus: 3-ketoacyl-CoA thiolase (436 aa).

Residue C99 is the Acyl-thioester intermediate of the active site. Active-site proton acceptor residues include H392 and C422.

The protein belongs to the thiolase-like superfamily. Thiolase family. As to quaternary structure, heterotetramer of two alpha chains (FadJ) and two beta chains (FadI).

Its subcellular location is the cytoplasm. It catalyses the reaction an acyl-CoA + acetyl-CoA = a 3-oxoacyl-CoA + CoA. It participates in lipid metabolism; fatty acid beta-oxidation. Functionally, catalyzes the final step of fatty acid oxidation in which acetyl-CoA is released and the CoA ester of a fatty acid two carbons shorter is formed. The protein is 3-ketoacyl-CoA thiolase of Shewanella frigidimarina (strain NCIMB 400).